A 140-amino-acid polypeptide reads, in one-letter code: Putative pre-16S rRNA nuclease (140 aa).

The protein belongs to the YqgF nuclease family.

The protein resides in the cytoplasm. Functionally, could be a nuclease involved in processing of the 5'-end of pre-16S rRNA. This Parabacteroides distasonis (strain ATCC 8503 / DSM 20701 / CIP 104284 / JCM 5825 / NCTC 11152) protein is Putative pre-16S rRNA nuclease.